A 380-amino-acid chain; its full sequence is Queuine tRNA-ribosyltransferase (380 aa).

The Proton acceptor role is filled by Asp96. Substrate contacts are provided by residues 96–100 (DSGGF), Asp150, Gln193, and Gly220. Residues 251–257 (GVGAPDS) form an RNA binding region. The active-site Nucleophile is Asp270. Positions 275-279 (TRIAR) are RNA binding; important for wobble base 34 recognition. Zn(2+)-binding residues include Cys308, Cys310, Cys313, and His339.

Belongs to the queuine tRNA-ribosyltransferase family. Homodimer. Within each dimer, one monomer is responsible for RNA recognition and catalysis, while the other monomer binds to the replacement base PreQ1. The cofactor is Zn(2+).

The enzyme catalyses 7-aminomethyl-7-carbaguanine + guanosine(34) in tRNA = 7-aminomethyl-7-carbaguanosine(34) in tRNA + guanine. The protein operates within tRNA modification; tRNA-queuosine biosynthesis. Its function is as follows. Catalyzes the base-exchange of a guanine (G) residue with the queuine precursor 7-aminomethyl-7-deazaguanine (PreQ1) at position 34 (anticodon wobble position) in tRNAs with GU(N) anticodons (tRNA-Asp, -Asn, -His and -Tyr). Catalysis occurs through a double-displacement mechanism. The nucleophile active site attacks the C1' of nucleotide 34 to detach the guanine base from the RNA, forming a covalent enzyme-RNA intermediate. The proton acceptor active site deprotonates the incoming PreQ1, allowing a nucleophilic attack on the C1' of the ribose to form the product. After dissociation, two additional enzymatic reactions on the tRNA convert PreQ1 to queuine (Q), resulting in the hypermodified nucleoside queuosine (7-(((4,5-cis-dihydroxy-2-cyclopenten-1-yl)amino)methyl)-7-deazaguanosine). The polypeptide is Queuine tRNA-ribosyltransferase (Streptococcus equi subsp. zooepidemicus (strain H70)).